Consider the following 141-residue polypeptide: Large ribosomal subunit protein uL11 (141 aa).

The protein belongs to the universal ribosomal protein uL11 family. In terms of assembly, part of the ribosomal stalk of the 50S ribosomal subunit. Interacts with L10 and the large rRNA to form the base of the stalk. L10 forms an elongated spine to which L12 dimers bind in a sequential fashion forming a multimeric L10(L12)X complex. One or more lysine residues are methylated.

Forms part of the ribosomal stalk which helps the ribosome interact with GTP-bound translation factors. The chain is Large ribosomal subunit protein uL11 from Campylobacter fetus subsp. fetus (strain 82-40).